A 281-amino-acid chain; its full sequence is Transcription factor HES-1 (281 aa).

Positions 1–44 (MPADIMEKNSSSPVAATPASVNTTPDKPKTASEHRKSSKPIMEK) are disordered. A compositionally biased stretch (low complexity) spans 10 to 21 (SSSPVAATPASV). Positions 26-35 (DKPKTASEHR) are enriched in basic and acidic residues. The bHLH domain occupies 34 to 91 (HRKSSKPIMEKRRRARINESLSQLKTLILDALKKDSSRHSKLEKADILEMTVKHLRNL). Residues 110 to 143 (YRAGFSECMNEVTRFLSTCEGVNTEVRTRLLGHL) enclose the Orange domain. Disordered regions lie at residues 158–206 (QAHP…PCKL) and 255–281 (TSVG…PWRN). Composition is skewed to pro residues over residues 164-174 (QAPPPPPPSGP) and 182-201 (FAPP…PPGS). The span at 255 to 272 (TSVGPNAVSPSSGSSLTA) shows a compositional bias: polar residues. A WRPW motif motif is present at residues 276–279 (WRPW).

Interacts with SIRT1. Interacts weakly with TLE2. Interacts with HES6. Transcription repression requires formation of a complex with a corepressor protein of the Groucho/TLE family. Interacts (via WPRW motif) with TLE1. Interacts with an FA complex, composed of FANCA, FANCF, FANCG and FANCL, but not of FANCC, nor FANCE. In terms of tissue distribution, present in all tissues examined but highest in epithelial cells and in mesoderm-derived tissues such as embryonal muscle cells.

The protein resides in the nucleus. Transcriptional repressor of genes that require a bHLH protein for their transcription. May act as a negative regulator of myogenesis by inhibiting the functions of MYOD1 and ASH1. Binds DNA on N-box motifs: 5'-CACNAG-3' with high affinity and on E-box motifs: 5'-CANNTG-3' with low affinity. May play a role in a functional FA core complex response to DNA cross-link damage, being required for the stability and nuclear localization of FA core complex proteins, as well as for FANCD2 monoubiquitination in response to DNA damage. The protein is Transcription factor HES-1 (Hes1) of Rattus norvegicus (Rat).